We begin with the raw amino-acid sequence, 433 residues long: UPF0597 protein PG_0909 (433 aa).

It belongs to the UPF0597 family.

This is UPF0597 protein PG_0909 from Porphyromonas gingivalis (strain ATCC BAA-308 / W83).